A 422-amino-acid polypeptide reads, in one-letter code: Aspartate--tRNA(Asp/Asn) ligase (422 aa).

An L-aspartate-binding site is contributed by Glu-158. The aspartate stretch occupies residues 180–183 (QLYK). Residue Arg-201 coordinates L-aspartate. Residues 201 to 203 (RME), 209 to 211 (RHL), and Glu-345 contribute to the ATP site. L-aspartate is bound by residues Ser-348 and Arg-352. An ATP-binding site is contributed by 393 to 396 (GAER).

This sequence belongs to the class-II aminoacyl-tRNA synthetase family. Type 2 subfamily. As to quaternary structure, homodimer. Makes part of a ribonucleoprotein particle (RNP) called transamidosome that allows channelling of the aa-tRNA from non-discriminating aspartyl-tRNA synthetase active site to the GatCAB amidotransferase site. The transamidosome complex is formed by two GatCABs, one dimeric ND-AspRSs and two tRNAs(Asn) molecules.

The protein resides in the cytoplasm. The enzyme catalyses tRNA(Asx) + L-aspartate + ATP = L-aspartyl-tRNA(Asx) + AMP + diphosphate. Aspartyl-tRNA synthetase with relaxed tRNA specificity since it is able to aspartylate not only its cognate tRNA(Asp) but also tRNA(Asn) with similar efficiencies. Reaction proceeds in two steps: L-aspartate is first activated by ATP to form Asp-AMP and then transferred to the acceptor end of tRNA(Asp/Asn). The chain is Aspartate--tRNA(Asp/Asn) ligase (aspS2) from Thermus thermophilus (strain ATCC 27634 / DSM 579 / HB8).